We begin with the raw amino-acid sequence, 531 residues long: Poly(A)-specific ribonuclease PNLDC1 (531 aa).

The Mg(2+) site is built by Asp28, Glu30, Asp271, and Asp365. Residues Ile506–Leu526 form a helical membrane-spanning segment.

Belongs to the CAF1 family. Requires Mg(2+) as cofactor. As to expression, specifically expressed in embryonic stem cells. Highly expressed in testis.

Its subcellular location is the endoplasmic reticulum membrane. It catalyses the reaction Exonucleolytic cleavage of poly(A) to 5'-AMP.. 3'-exoribonuclease that has a preference for poly(A) tails of mRNAs, thereby efficiently degrading poly(A) tails. Exonucleolytic degradation of the poly(A) tail is often the first step in the decay of eukaryotic mRNAs and is also used to silence certain maternal mRNAs translationally during oocyte maturation and early embryonic development. May act as a regulator of multipotency in embryonic stem cells. Is a critical factor for proper spermatogenesis, involved in pre-piRNAs processing to generate mature piRNAs. This chain is Poly(A)-specific ribonuclease PNLDC1, found in Mus musculus (Mouse).